Reading from the N-terminus, the 389-residue chain is Na(+)/H(+) antiporter NhaA 1 (389 aa).

The next 11 helical transmembrane spans lie at 12–32, 62–82, 97–117, 128–148, 157–177, 184–204, 220–240, 260–280, 282–302, 331–351, and 365–385; these read VLNEAFGGVLLIVCTLLALLV, FLLWINDGLISIFFFAIGLEL, IVLPFMAALGGILIPAMLFAL, GWAIPTATDTAFALAILMMCG, IFLLSLAIFDDVGAILIIAIF, IAAFVIAGLAILVMLILNLLG, ISVLKSGVHATLAGIVTAFFI, FWIAFIILPLFAFANAGVNLS, IDIGAIFSGVSIGIFLGLFVG, LYGVCILTGIGFTMSLFIDGL, and LAILIASFCSGIWGFIYLKFF.

Belongs to the NhaA Na(+)/H(+) (TC 2.A.33) antiporter family.

The protein resides in the cell inner membrane. The catalysed reaction is Na(+)(in) + 2 H(+)(out) = Na(+)(out) + 2 H(+)(in). Functionally, na(+)/H(+) antiporter that extrudes sodium in exchange for external protons. The chain is Na(+)/H(+) antiporter NhaA 1 from Campylobacter jejuni subsp. jejuni serotype O:2 (strain ATCC 700819 / NCTC 11168).